Consider the following 499-residue polypeptide: MSSTISLKPTHLILSSFSTGKVLQFRRSRFSHTPSSSSSRYRTLVAQLGFRPDSFDFIKDHAENLLYTIADAAVSSSETFESVAGTTTKTTQSNDWFSGIANYMETILKVLKDGLSTVHVPYSYGFAIILLTVLVKAATFPLTKKQVESAMAMKSLTPQIKAIQERYAGDQEKIQLETARLYKLAGINPLAGCLPTLATIPVWIGLYRALSNVADEGLLTEGFFWIPSLAGPTTVAARQNGSGISWLFPFIEGHPPLGWPDTLAYLVLPLLLVFSQYLSIQIMQSSQSNDPAMKSSQAVTKLLPLMIGYFALSVPSGLSLYWLTNNILSTAQQVWLQKYGGAKNPVEKFTNLVTKEDKTQQIEKSFSEPLVQKSVSELKIPREKGGEKVTPECPKPGERFRLLKEQEAKRRREKEERQKAEAALSNQNTDKAHEQDEKSDTAIVAEDDKKTELSAVDETSDGTVAVNGKPSIQKDETTNGTFGIGHDTEQQHSHETEKR.

The transit peptide at methionine 1–valine 45 directs the protein to the chloroplast. The next 4 membrane-spanning stretches (helical) occupy residues leucine 115 to valine 135, leucine 184 to isoleucine 204, leucine 263 to methionine 283, and leucine 302 to tryptophan 322. Residues leucine 378–arginine 499 are disordered. 3 stretches are compositionally biased toward basic and acidic residues: residues lysine 379–alanine 420, aspartate 430–glutamate 452, and histidine 486–arginine 499. Positions glycine 397–aspartate 436 form a coiled coil.

The protein belongs to the OXA1/ALB3/YidC (TC 2.A.9.2) family. As to quaternary structure, homodimer. Interacts with ALB3. Interacts with STIC2. Highly expressed in green tissues.

Its subcellular location is the plastid. It localises to the chloroplast thylakoid membrane. In terms of biological role, required for the insertion of some light harvesting chlorophyll-binding proteins (LHCP) into the chloroplast thylakoid membrane. Plays a role in the accumulation of some cytochrome b6f components in the thylakoid membrane. Required for the assembly and/or stability of the F(1)F(0) ATP synthase in chloroplast thylakoid membranes. Functions to stabilize or promote assembly of F(1) during its attachment to the membrane-embedded F(0) part. Participates with STIC2 in thylakoid protein targeting. May function with a specific subset of thylakoidal proteins. In Arabidopsis thaliana (Mouse-ear cress), this protein is ALBINO3-like protein 1, chloroplastic.